The following is a 66-amino-acid chain: Large ribosomal subunit protein bL35 (66 aa).

The disordered stretch occupies residues 20–41 (GKVMSAQRGKRHGMIKRTKKQI). The segment covering 27-41 (RGKRHGMIKRTKKQI) has biased composition (basic residues).

The protein belongs to the bacterial ribosomal protein bL35 family.

The sequence is that of Large ribosomal subunit protein bL35 from Rhodopseudomonas palustris (strain BisB5).